A 399-amino-acid chain; its full sequence is Nicotinate phosphoribosyltransferase (399 aa).

Histidine 217 carries the post-translational modification Phosphohistidine; by autocatalysis.

It belongs to the NAPRTase family. In terms of processing, transiently phosphorylated on a His residue during the reaction cycle. Phosphorylation strongly increases the affinity for substrates and increases the rate of nicotinate D-ribonucleotide production. Dephosphorylation regenerates the low-affinity form of the enzyme, leading to product release.

The catalysed reaction is nicotinate + 5-phospho-alpha-D-ribose 1-diphosphate + ATP + H2O = nicotinate beta-D-ribonucleotide + ADP + phosphate + diphosphate. It participates in cofactor biosynthesis; NAD(+) biosynthesis; nicotinate D-ribonucleotide from nicotinate: step 1/1. Functionally, catalyzes the synthesis of beta-nicotinate D-ribonucleotide from nicotinate and 5-phospho-D-ribose 1-phosphate at the expense of ATP. This chain is Nicotinate phosphoribosyltransferase, found in Burkholderia orbicola (strain MC0-3).